The sequence spans 526 residues: Lysine--tRNA ligase (526 aa).

2 residues coordinate Mg(2+): E431 and E438.

Belongs to the class-II aminoacyl-tRNA synthetase family. In terms of assembly, homodimer. The cofactor is Mg(2+).

The protein resides in the cytoplasm. It carries out the reaction tRNA(Lys) + L-lysine + ATP = L-lysyl-tRNA(Lys) + AMP + diphosphate. In Chlamydia trachomatis serovar D (strain ATCC VR-885 / DSM 19411 / UW-3/Cx), this protein is Lysine--tRNA ligase (lysS).